A 588-amino-acid polypeptide reads, in one-letter code: MSGFDAVLLVAVLLLALIVLGAVLVGVRAVRGIAGAPRPEDPAFIAEKDRQEQSLAALRSAADEANSTVDAAKSAAAAARTEAAAARAEAKAARAEARRVLDGARAEADTILERVHKQAEADAEQLRTAARRSGEREAAVLATTTREQAAEVERRAARMDDRERLHSEEVERLAERDRQLSAASAALAARESTLVDRDRELAQAEDRRRRELERVAGITAEAARGELVEAIEAQAKREAALLVREIESEARNTGEERARHIVVDAIQRVASEQTAESVVSVLHLPGDEMKGRIIGREGRNIRAFESVTGVNLIIDDTPEAVLLSCFDPVRREVGRLTLEKLVLDGRIHPHRIEEVHDLARQEVVQLCQRAAEDALVEVGITEIHPELVSLLGRLRYRTSYGQNVLKHLVETAHIAGIMAAELRLDVPTIKRCAFLHDIGKALTHEVEGSHAIVGADVARKYGESEDVVHAIEAHHNEVPPQTIEAVLTQASDACSGGRPGARRESLEAYVRRLERIEEIAAGKLGVERVFAMQAGREVRVMVRPEDVDDISASVLARDVAKQIEEELTYPGQIRVTVVRESRVTEIAR.

The chain crosses the membrane as a helical span at residues 7 to 27 (VLLVAVLLLALIVLGAVLVGV). The segment at 130-162 (ARRSGEREAAVLATTTREQAAEVERRAARMDDR) is disordered. Basic and acidic residues predominate over residues 148–162 (QAAEVERRAARMDDR). A KH domain is found at 278–359 (VVSVLHLPGD…HRIEEVHDLA (82 aa)). Positions 404–497 (VLKHLVETAH…TQASDACSGG (94 aa)) constitute an HD domain.

The protein belongs to the RNase Y family.

Its subcellular location is the cell membrane. Its function is as follows. Endoribonuclease that initiates mRNA decay. This chain is Ribonuclease Y, found in Salinispora arenicola (strain CNS-205).